The sequence spans 669 residues: RNA-binding protein 14 (669 aa).

RRM domains are found at residues 1-73 and 79-149; these read MKIF…MSRP and WKIF…LSTK. Residues Lys-126, Lys-135, Lys-138, Lys-149, and Lys-153 each participate in a glycyl lysine isopeptide (Lys-Gly) (interchain with G-Cter in SUMO2) cross-link. Disordered stretches follow at residues 147-175 and 193-232; these read STKG…DTAF and NSTG…PLTA. Phosphoserine is present on Ser-161. Residue Lys-164 is modified to N6-acetyllysine; alternate. Residue Lys-164 forms a Glycyl lysine isopeptide (Lys-Gly) (interchain with G-Cter in SUMO2); alternate linkage. Residue Thr-206 is modified to Phosphothreonine. Phosphoserine is present on residues Ser-220, Ser-242, Ser-244, Ser-256, Ser-272, and Ser-280. A disordered region spans residues 284-303; the sequence is PYRGQLASPSSQSAAASSLG. The segment covering 287–303 has biased composition (low complexity); that stretch reads GQLASPSSQSAAASSLG. The segment at 307–354 is TRBP-interacting domain; interaction with STIL; the sequence is GAQPSASALSSYGGQAAAASSLNSYGAQGSSLASYGNQPSSYGAQAAS. Residues Ser-520, Ser-523, Ser-527, and Ser-562 each carry the phosphoserine modification. Positions 566–592 are disordered; it reads VANANSTPPPYERTRLSPPRASYDDPY. Thr-572 is modified (phosphothreonine). Phosphoserine is present on Ser-582. Lys-600 is covalently cross-linked (Glycyl lysine isopeptide (Lys-Gly) (interchain with G-Cter in SUMO2)). 6 positions are modified to phosphoserine: Ser-618, Ser-620, Ser-623, Ser-627, Ser-643, and Ser-649.

As to quaternary structure, interacts with NCOA6, CITED1 and XRCC5/KU86. Interacts with SS18. Interacts with STIL and interferes with its interaction with CPAP. Interacts with gamma-tubulin. Part of the HDP-RNP complex composed of at least HEXIM1, PRKDC, XRCC5, XRCC6, paraspeckle proteins (SFPQ, NONO, PSPC1, RBM14, and MATR3) and NEAT1 RNA.

It is found in the nucleus. The protein localises to the nucleolus. Its subcellular location is the cytoplasm. May function as a nuclear receptor coactivator, enhancing transcription through other coactivators such as NCOA6 and CITED1. Regulates centriole biogenesis by suppressing the formation of aberrant centriolar protein complexes in the cytoplasm and thus preserving mitotic spindle integrity. Prevents the formation of the STIL-CPAP complex (which can induce the formation of aberrant centriolar protein complexes) by interfering with the interaction of STIL with CPAP. Plays a role in the regulation of DNA virus-mediated innate immune response by assembling into the HDP-RNP complex, a complex that serves as a platform for IRF3 phosphorylation and subsequent innate immune response activation through the cGAS-STING pathway. The chain is RNA-binding protein 14 (RBM14) from Pongo abelii (Sumatran orangutan).